Reading from the N-terminus, the 97-residue chain is MTSSSTPRMHTYKRTSSPRSPTNTGELFTPAHEENVRFIHDTWLCVLRDIKCPQNHERNDRGPQEYVEKNPNPNLHSFIPVDLSDLKKRNTQDSKKS.

Residues 1-26 are compositionally biased toward polar residues; the sequence is MTSSSTPRMHTYKRTSSPRSPTNTGE. Disordered regions lie at residues 1 to 27 and 54 to 97; these read MTSSSTPRMHTYKRTSSPRSPTNTGEL and QNHE…SKKS. Composition is skewed to basic and acidic residues over residues 54-68 and 84-97; these read QNHERNDRGPQEYVE and SDLKKRNTQDSKKS. The short motif at 80–84 is the PXDLS motif element; sequence PVDLS.

It belongs to the MCRIP family.

It is found in the nucleus. The protein resides in the cytoplasm. The protein localises to the stress granule. In terms of biological role, may play a role in the regulation of the epithelial-mesenchymal transition. The protein is Mapk-regulated corepressor-interacting protein 1 (mcrip1) of Danio rerio (Zebrafish).